Here is a 131-residue protein sequence, read N- to C-terminus: Large ribosomal subunit protein bL12 (131 aa).

The protein belongs to the bacterial ribosomal protein bL12 family. In terms of assembly, homodimer. Part of the ribosomal stalk of the 50S ribosomal subunit. Forms a multimeric L10(L12)X complex, where L10 forms an elongated spine to which 2 to 4 L12 dimers bind in a sequential fashion. Binds GTP-bound translation factors.

Its function is as follows. Forms part of the ribosomal stalk which helps the ribosome interact with GTP-bound translation factors. Is thus essential for accurate translation. The chain is Large ribosomal subunit protein bL12 from Prochlorococcus marinus (strain MIT 9312).